A 99-amino-acid chain; its full sequence is Protein MOST-1 (99 aa).

In terms of assembly, interacts with TSPO, IGHM and IGHD. In terms of tissue distribution, expressed in the heart, kidney, liver, pancreas, small intestine, ovary, testis, prostate and thymus. Expressed in all of the cancer cell lines tested.

Its subcellular location is the cytoplasm. It is found in the microsome membrane. The protein resides in the endoplasmic reticulum membrane. In terms of biological role, may be involved in cell survival, proliferation and progression of cancer cells. In Homo sapiens (Human), this protein is Protein MOST-1 (C8orf17).